Reading from the N-terminus, the 674-residue chain is DNA ligase (674 aa).

NAD(+)-binding positions include 34 to 38 (DADFD), 82 to 83 (SL), and Glu-107. The active-site N6-AMP-lysine intermediate is the Lys-109. The NAD(+) site is built by Arg-130, Glu-170, Lys-286, and Lys-310. 4 residues coordinate Zn(2+): Cys-404, Cys-407, Cys-423, and Cys-429. The 82-residue stretch at 593 to 674 (KPAQTLEGIT…FTRLLETGEA (82 aa)) folds into the BRCT domain.

It belongs to the NAD-dependent DNA ligase family. LigA subfamily. The cofactor is Mg(2+). Mn(2+) is required as a cofactor.

It carries out the reaction NAD(+) + (deoxyribonucleotide)n-3'-hydroxyl + 5'-phospho-(deoxyribonucleotide)m = (deoxyribonucleotide)n+m + AMP + beta-nicotinamide D-nucleotide.. DNA ligase that catalyzes the formation of phosphodiester linkages between 5'-phosphoryl and 3'-hydroxyl groups in double-stranded DNA using NAD as a coenzyme and as the energy source for the reaction. It is essential for DNA replication and repair of damaged DNA. This is DNA ligase from Corynebacterium aurimucosum (strain ATCC 700975 / DSM 44827 / CIP 107346 / CN-1) (Corynebacterium nigricans).